The primary structure comprises 1513 residues: MRVLSKSLAAMVAAATLVGGGAFAVAGTAYAADNDAITVTPNPWYANSFDGWGTSLAWFANATGSLGEESAITTNLGDDASKAKAVEYGKQLREQFYQSIFGDEGLDLNMARYNVGGGNASDVAYGYPFMRQGAAVPGTWKDDATGSGTYGNGVTTKQADKDKLAAAFDPTDDNQYDFSKSAAQDWWIERGATGDNPDITDVEAFANSAPWFLTNSGYATGGRNSGSNNLANPEKFAQYMAKNVEHLESLGANVDTVEPFNESETSYWGTPGDMASKYTDESDDNTKLINNYWDKYYSDKDRSVTPYSNALKKPQEGMHVSNAQQQQTITALAEALKDNDDTIIAATDATNSADFVKSYNQYPQAIKDLIGQYNVHAYSDSNQMQSRDIAQADGKKLSMSEVDGSWQSGSYNPYGFDNALGMMSKISSNVTRLQSKDFTFWQVVEDLYNMQMGSNVNPAGENTNWGTVLIDFDCTVAGMDGKLYSERRVNNNGGTTDGLEPCTVIANAKYNGVKAITHFIHAGDKVIANNDEDNNMTATSDDGKTQTVIHRNSGTSDQTFVIDLSKYGEIADNAYGELYLTTETSAEDKNAGVDSATPEVFAKTSNVKQAEGSVMIDKAAKTATVTVPARSIASIQLTGVTGYAKDAAVETGDTYQLVGKQSGKAVADTTSGDSALSLANVASDAENAKKQTWTFTQIEQPTDSERPDLKAYVITNAEGKVLVSKDGTNALSNETVGAAKSDPAAKWILNTSDGSTYQLLNAATKTNLDVDNSGTTVGTKVGLWQSPSGTSPSANQTWTLRNVTPTSQKTVNVQTAVNEKAVLPVEVTLYYTWGEGKATVANWDTSKVDVAKEGAYEATATATDVYGNEFNVTATVYVGALTVSDPVSATVLAGTSASEAKAALEAAPVYLHVKASPAFEGDAAKVTWNFDGLDTKLADAKAGDNIAVTGTYQLDDATTIALKGAIYVTAATPENVADTASNLTVTNQQTEYSKGDQWKKLTDGDTSAEAWVTWNSAGDYSASPTATIDFGSECELSSVTITYGDKAPASAKAEYTTDGETWMQFGSDVKPAAGQTVTFKADKGTVNATKMRIVNTVNNDYMNATEIQAFVTPVQGAAKNIAAASGTNFSVNFQEGASASKAIDGDTTSKGWSTWASTASTVDPVATFTFDEAQTITEVKTFFYYDGRASWPKSQTLEYQDEAGEWHGVGTKDGWKIQAGDAGSGSDGITAADTPTVDFVLGTPVKAKAIRLTNTLQDTKVYINVAEIQVFAQDSTVLTPQPASDATLGDLRLDGETVEGFDPSKTDYTVDLPVDAEANPVLQAFATDNAAAVKVTGDAVENGKLGGKAAITVTSADESETKTYTVTFNAFTLASLKVIGPTKTEYAIGDKLDTAGLKVTAVYQSGDKTKEVPVALDDPQLAIGSFDSTTAGKKAITVSYRGVTATFNVTVKANAVAPGPEEQKPGNTNKPGATGNGNKNTVANTGSSVAAIAGAVALLAAAAGALFMLRKRA.

An N-terminal signal peptide occupies residues 1–31 (MRVLSKSLAAMVAAATLVGGGAFAVAGTAYA). The region spanning 666–801 (VADTTSGDSA…PSANQTWTLR (136 aa)) is the Ricin B-type lectin domain. 2 F5/8 type C domains span residues 965-1112 (AIYV…AFVT) and 1116-1273 (GAAK…VFAQ). The interval 1456–1480 (VAPGPEEQKPGNTNKPGATGNGNKN) is disordered. Residues 1465–1480 (PGNTNKPGATGNGNKN) are compositionally biased toward polar residues. Residues 1489 to 1509 (VAAIAGAVALLAAAAGALFML) form a helical membrane-spanning segment.

Belongs to the glycosyl hydrolase 30 family.

It localises to the cell membrane. It carries out the reaction Hydrolysis of (1-&gt;6)-beta-D-galactosidic linkages in arabinogalactan proteins and (1-&gt;3):(1-&gt;6)-beta-galactans to yield (1-&gt;6)-beta-galactobiose as the final product.. Functionally, involved in the type II arabinogalactan (AG) side chains degradation. Specifically releases the non-reducing terminal beta-1,6-galactobiose (beta-1,6-Gal2) from both dearabinosylated larch AG and polymeric beta-1,6-galactan chains by an exo-mode of action. Shows lower activity with larch AG, and very weak activity with dearabinosylated gum arabic, gum arabic and potato galactan. Can probably release beta-1,6-Gal2 from the internal side chains of type II AG. This is Exo-beta-1,6-galactobiohydrolase from Bifidobacterium longum subsp. longum (strain ATCC 15707 / DSM 20219 / JCM 1217 / NCTC 11818 / E194b).